Consider the following 398-residue polypeptide: Acetate kinase 1 (398 aa).

N9 contributes to the Mg(2+) binding site. Residue K16 participates in ATP binding. R89 provides a ligand contact to substrate. D146 (proton donor/acceptor) is an active-site residue. ATP is bound by residues 206-210 (HLGNG), 281-283 (DCR), and 329-333 (GIGEN). E384 contributes to the Mg(2+) binding site.

The protein belongs to the acetokinase family. In terms of assembly, homodimer. Mg(2+) serves as cofactor. The cofactor is Mn(2+).

The protein resides in the cytoplasm. The catalysed reaction is acetate + ATP = acetyl phosphate + ADP. The protein operates within metabolic intermediate biosynthesis; acetyl-CoA biosynthesis; acetyl-CoA from acetate: step 1/2. In terms of biological role, catalyzes the formation of acetyl phosphate from acetate and ATP. Can also catalyze the reverse reaction. This chain is Acetate kinase 1, found in Aliivibrio fischeri (strain ATCC 700601 / ES114) (Vibrio fischeri).